Consider the following 745-residue polypeptide: uncharacterized protein (745 aa).

The HTH araC/xylS-type domain maps to 158–256; it reads NQVCDYIELH…HQTPKQYRGD (99 aa). 2 DNA-binding regions (H-T-H motif) span residues 175–196 and 223–246; these read SELSEYVGWSESHLSKKFTESL and ITDIALQNGFSSAASFARTFKHFT.

This is an uncharacterized protein from Staphylococcus aureus (strain MW2).